The chain runs to 736 residues: Phosphoribosylformylglycinamidine synthase subunit PurL (736 aa).

Histidine 50 is a catalytic residue. ATP is bound by residues tyrosine 53 and lysine 92. Residue glutamate 94 coordinates Mg(2+). Residues 95–98 (SHNH) and arginine 117 each bind substrate. Residue histidine 96 is the Proton acceptor of the active site. Aspartate 118 contacts Mg(2+). A substrate-binding site is contributed by glutamine 241. Aspartate 269 serves as a coordination point for Mg(2+). 313–315 (ESQ) provides a ligand contact to substrate. Residues aspartate 495 and glycine 532 each coordinate ATP. Asparagine 533 lines the Mg(2+) pocket. Serine 535 lines the substrate pocket.

This sequence belongs to the FGAMS family. Monomer. Part of the FGAM synthase complex composed of 1 PurL, 1 PurQ and 2 PurS subunits.

Its subcellular location is the cytoplasm. The catalysed reaction is N(2)-formyl-N(1)-(5-phospho-beta-D-ribosyl)glycinamide + L-glutamine + ATP + H2O = 2-formamido-N(1)-(5-O-phospho-beta-D-ribosyl)acetamidine + L-glutamate + ADP + phosphate + H(+). Its pathway is purine metabolism; IMP biosynthesis via de novo pathway; 5-amino-1-(5-phospho-D-ribosyl)imidazole from N(2)-formyl-N(1)-(5-phospho-D-ribosyl)glycinamide: step 1/2. Part of the phosphoribosylformylglycinamidine synthase complex involved in the purines biosynthetic pathway. Catalyzes the ATP-dependent conversion of formylglycinamide ribonucleotide (FGAR) and glutamine to yield formylglycinamidine ribonucleotide (FGAM) and glutamate. The FGAM synthase complex is composed of three subunits. PurQ produces an ammonia molecule by converting glutamine to glutamate. PurL transfers the ammonia molecule to FGAR to form FGAM in an ATP-dependent manner. PurS interacts with PurQ and PurL and is thought to assist in the transfer of the ammonia molecule from PurQ to PurL. This chain is Phosphoribosylformylglycinamidine synthase subunit PurL, found in Bartonella tribocorum (strain CIP 105476 / IBS 506).